The sequence spans 719 residues: Serine/threonine-protein kinase CBK1 (719 aa).

Disordered stretches follow at residues 1-75 (MFGQ…GAGF) and 100-219 (MQQQ…QTSG). Residues 24–38 (QFSSAYMEQQGSHQS) are compositionally biased toward polar residues. The segment covering 40–63 (QEHLAYEQLQLQQQQQQQQQHAAA) has biased composition (low complexity). Polar residues-rich tracts occupy residues 112 to 130 (ATSIYSQNNNSFTNVNDTT), 139 to 157 (GHYSNSSDYSGQQPASSAY), and 181 to 219 (GDQTLVGNQSSQGAMLSRQSLQCSSVPQSPNGGQRQTSG). The Protein kinase domain maps to 310 to 631 (FHTVKVIGKG…ANEIKNHPFF (322 aa)). Residues 316 to 324 (IGKGAFGEV) and Lys-339 contribute to the ATP site. The active-site Proton acceptor is the Asp-433. Residues 632–717 (RGVDWETIRQ…SRFDYLTRKN (86 aa)) form the AGC-kinase C-terminal domain.

This sequence belongs to the protein kinase superfamily. STE Ser/Thr protein kinase family. COT1 subfamily.

The catalysed reaction is L-seryl-[protein] + ATP = O-phospho-L-seryl-[protein] + ADP + H(+). It carries out the reaction L-threonyl-[protein] + ATP = O-phospho-L-threonyl-[protein] + ADP + H(+). Protein kinase that seems to play a role in the regulation of cell morphogenesis and proliferation. The sequence is that of Serine/threonine-protein kinase CBK1 (CBK1) from Eremothecium gossypii (strain ATCC 10895 / CBS 109.51 / FGSC 9923 / NRRL Y-1056) (Yeast).